The sequence spans 221 residues: GTP cyclohydrolase III (221 aa).

This sequence belongs to the archaeal-type GTP cyclohydrolase family.

It catalyses the reaction GTP + 3 H2O = 2-amino-5-formylamino-6-(5-phospho-D-ribosylamino)pyrimidin-4(3H)-one + 2 phosphate + 2 H(+). In terms of biological role, catalyzes the formation of 2-amino-5-formylamino-6-ribofuranosylamino-4(3H)-pyrimidinone ribonucleotide monophosphate and inorganic phosphate from GTP. Also has an independent pyrophosphate phosphohydrolase activity. The polypeptide is GTP cyclohydrolase III (Pyrobaculum islandicum (strain DSM 4184 / JCM 9189 / GEO3)).